Reading from the N-terminus, the 300-residue chain is Ribosomal protein L11 methyltransferase (300 aa).

The S-adenosyl-L-methionine site is built by T152, G173, D195, and N234.

The protein belongs to the methyltransferase superfamily. PrmA family.

Its subcellular location is the cytoplasm. It carries out the reaction L-lysyl-[protein] + 3 S-adenosyl-L-methionine = N(6),N(6),N(6)-trimethyl-L-lysyl-[protein] + 3 S-adenosyl-L-homocysteine + 3 H(+). Its function is as follows. Methylates ribosomal protein L11. In Burkholderia pseudomallei (strain K96243), this protein is Ribosomal protein L11 methyltransferase.